A 477-amino-acid polypeptide reads, in one-letter code: Pyruvate kinase (477 aa).

A substrate-binding site is contributed by Arg-34. Residues Asn-36, Asp-64, and Thr-65 each coordinate K(+). 36–39 (NTAH) contacts ATP. ATP-binding residues include Arg-71 and Lys-150. A Mg(2+)-binding site is contributed by Glu-216. Gly-239, Asp-240, and Thr-272 together coordinate substrate. Position 240 (Asp-240) interacts with Mg(2+).

It belongs to the pyruvate kinase family. As to quaternary structure, homotetramer. The cofactor is Mg(2+). K(+) serves as cofactor.

It catalyses the reaction pyruvate + ATP = phosphoenolpyruvate + ADP + H(+). The protein operates within carbohydrate degradation; glycolysis; pyruvate from D-glyceraldehyde 3-phosphate: step 5/5. The polypeptide is Pyruvate kinase (pyk) (Borreliella burgdorferi (strain ATCC 35210 / DSM 4680 / CIP 102532 / B31) (Borrelia burgdorferi)).